Reading from the N-terminus, the 1257-residue chain is Protein flightless-1 homolog (1257 aa).

LRR repeat units follow at residues 6-31 (LQFVKGIDFSGNDFSGDRFPHDVEQM), 32-54 (TQMTWLKLNDSKLEQVPDELSRC), 56-77 (NLEHLQMAHNQLISVHGELSDL), 78-102 (PRLRSVIVRDNNLKTAGIPTDIFRM), 103-126 (KDLTIIDLSRNQLREVPTNLEYAK), 128-148 (SIVLNLSYNNIETIPNSVCAN), 149-172 (LIDLLFLDLSNNKLDMLPPQIRRL), 174-195 (MLQSLKLSNNPLNHFQLKQLPS), 197-221 (TSLSVLHMSNTNRTLDNIPPTLDDM), 222-244 (HNLRDVDFSENNLPIVPEALFKL), 246-267 (NLRKLNLSGNKIEKLNMTEGEW), 268-290 (ENLETLNMSHNQLTVLPDCVVKL), 292-315 (RLTKLYAANNQLTFEGIPSGIGKL), 316-338 (IQLTVLHLSYNKLELVPEGISRC), 339-361 (VKLQKLKLDHNRLITLPEGIHLL), and 363-384 (DLKVLDLHENENLVMPPKPNDA). Gelsolin-like repeat units lie at residues 523–600 (MDEA…EEFL), 640–714 (AVEM…PEFW), 759–832 (ELPK…MMFR), and 1168–1243 (EKTV…CRFR).

The protein belongs to the villin/gelsolin family.

Functionally, may play a key role in embryonic cellularization by interacting with both the cytoskeleton and other cellular components. This is Protein flightless-1 homolog (fli-1) from Caenorhabditis elegans.